The chain runs to 296 residues: Enoyl-CoA hydratase AFT3-1 (296 aa).

The short motif at 294-296 (PKL) is the Peroxisomal targeting signal type 1 element.

Belongs to the enoyl-CoA hydratase/isomerase family.

It localises to the peroxisome. It carries out the reaction a (3S)-3-hydroxyacyl-CoA = a (2E)-enoyl-CoA + H2O. It catalyses the reaction a 4-saturated-(3S)-3-hydroxyacyl-CoA = a (3E)-enoyl-CoA + H2O. It functions in the pathway mycotoxin biosynthesis. Functionally, enoyl-CoA hydratase; part of the gene clusters that mediate the biosynthesis of the host-selective toxins (HSTs) AF-toxins responsible for Alternaria black spot of strawberry disease by the strawberry pathotype. AF-toxin I and III are valine derivatives of 2,3-dyhydroxy-isovaleric acid and 2-hydroxy-isovaleric acid respectively, while AF II is an isoleucine derivative of 2-hydroxy-valeric acid. These derivatives are bound to a 9,10-epoxy-8-hydroxy-9-methyl-decatrienoic acid (EDA) moiety. On cellular level, AF-toxins affect plasma membrane of susceptible cells and cause a sudden increase in loss of K(+) after a few minutes of toxin treatment. The aldo-keto reductase AFTS1 catalyzes the conversion of 2-keto-isovaleric acid (2-KIV) to 2-hydroxy-isovaleric acid (2-HIV) by reduction of its ketone to an alcohol. The acyl-CoA ligase AFT1, the hydrolase AFT2 and the enoyl-CoA hydratases AFT3 and AFT6, but also the polyketide synthase AFT9, the acyl-CoA dehydrogenase AFT10, the cytochrome P450 monooxygenase AFT11 and the oxidoreductase AFT12 are all involved in the biosynthesis of the AK-, AF- and ACT-toxin common EDA structural moiety. The exact function of each enzyme, and of additional enzymes identified within the AF-toxin clusters have still to be determined. The chain is Enoyl-CoA hydratase AFT3-1 (AFT3-1) from Alternaria alternata (Alternaria rot fungus).